The primary structure comprises 903 residues: FIGNL1-interacting regulator of recombination and mitosis (903 aa).

Phosphoserine occurs at positions 101 and 795. Position 843 is an N6-acetyllysine (lysine 843).

In terms of assembly, interacts (via its N-terminal region) with PLK1; controls PLK1 kinase activity. Interacts (via the KVVXF motif) with PPP1CC; controls PLK1 kinase activity. Interacts with FIGNL1; may regulate homologous recombination. Post-translationally, phosphorylation at Ser-101 by PLK1 strengthens FIRRM-PLK1 interaction. Phosphorylation at Ser-795 by PLK1 negatively regulates its interaction with PPP1CC.

It is found in the chromosome. Its subcellular location is the centromere. It localises to the kinetochore. The protein localises to the nucleus. The protein resides in the midbody. It is found in the cytoplasm. Its subcellular location is the cytoskeleton. It localises to the spindle. Regulates PLK1 kinase activity at kinetochores and promotes faithful chromosome segregation in prometaphase by bridging kinase and phosphatase activities. Phosphorylation of FIRRM by PLK1 negatively regulates its interaction with the phosphatase, PPP1CC, thus creating a negative feedback loop for maintaining proper PLK1 kinase activity during mitosis. In complex with FIGL1 may regulate homologous recombination. This chain is FIGNL1-interacting regulator of recombination and mitosis, found in Mus musculus (Mouse).